Consider the following 340-residue polypeptide: UDP-N-acetylenolpyruvoylglucosamine reductase (340 aa).

In terms of domain architecture, FAD-binding PCMH-type spans 11–181 (ISVKAKKIIS…VAIGLKLKKK (171 aa)). The active site involves Arg156. Catalysis depends on Ser227, which acts as the Proton donor. Glu323 is a catalytic residue.

It belongs to the MurB family. FAD is required as a cofactor.

The protein resides in the cytoplasm. The enzyme catalyses UDP-N-acetyl-alpha-D-muramate + NADP(+) = UDP-N-acetyl-3-O-(1-carboxyvinyl)-alpha-D-glucosamine + NADPH + H(+). The protein operates within cell wall biogenesis; peptidoglycan biosynthesis. Functionally, cell wall formation. In Wigglesworthia glossinidia brevipalpis, this protein is UDP-N-acetylenolpyruvoylglucosamine reductase.